The sequence spans 217 residues: Salivary glue protein Sgs-3 (217 aa).

Residues 1-23 form the signal peptide; it reads MKLTIATVLASILLIGFANVANC. A compositionally biased stretch (low complexity) spans 45–130; the sequence is KSTSTTTTTT…KPTTHSTPKT (86 aa). The disordered stretch occupies residues 45 to 163; the sequence is KSTSTTTTTT…KHTTPTTTTT (119 aa). The span at 131 to 154 shows a compositional bias: basic residues; the sequence is KPTKHTTPKTKPTKHTTPKTKPTK.

In Drosophila simulans (Fruit fly), this protein is Salivary glue protein Sgs-3 (Sgs3).